The sequence spans 54 residues: Ovomucoid (54 aa).

The region spanning 4–54 (VDCSEYPKPACTMEHRPLCGSDNQTYDNKCNFCNAVVESNGTLTLSHFGKC) is the Kazal-like domain. 3 disulfide bridges follow: Cys6/Cys36, Cys14/Cys33, and Cys22/Cys54. N-linked (GlcNAc...) asparagine glycosylation occurs at Asn43.

It is found in the secreted. This is Ovomucoid from Guttera pucherani (Eastern crested guineafowl).